Reading from the N-terminus, the 616-residue chain is MTIKQTHSFQTEVSQLLHLMIHSLYSNKEIFLRELISNASDAVDKLKFKSLSDDTLIEGKEALQIHIDVNKDANTITITDNGIGMSEVEVNKNIGTIANSGTKKFLKSLNETQAQDSNLIGQFGVGFYSSFIVSDKVEIITRKAGSKSKKGTKWASTGKGKYSIESIDRPDFGTSVILHIKKDEKEFLDDYRLRNIISKYSDHITVPIMMVKVSEDNKDIEYERINKANAFWAQDKQDLKQKDYDEFYKSLTYDLEAPLTQLHNRVEGNIDYTSLLFIPSKSPFDIWEPKRKGGIKLYAKRVFIMEDNEALMPLYLRFVKGVIDTADLSLNLSREILQDNKVIKAIRKASVKRILSVLEKMAKNKPEDYATFWQEFGMLMKEGVVEDTINKDKIAKLLRFTTNKSKNATQTVTLEHYIKNIQKDQKAIYYITAETYETAKGSPHLENFNQKNIEVLLLSDRVDEWMVSNFREFDGIQLKSIAKGNLEDFDSKEEKKAKEEVAKNFEIVIEKMQKILDSQVKEIKISSRLSESPSCLVADENEMGGNMERIMKSLGQDIPDTKPILEINPTHSLVKKLKTKIDEDLVKVLFDQAVLSEGGQLKDPAEFVKRINKLIN.

Residues 1–334 are a; substrate-binding; sequence MTIKQTHSFQ…TADLSLNLSR (334 aa). Residues 335–549 form a b region; it reads EILQDNKVIK…ENEMGGNMER (215 aa). The c stretch occupies residues 550–616; sequence IMKSLGQDIP…FVKRINKLIN (67 aa).

This sequence belongs to the heat shock protein 90 family. In terms of assembly, homodimer.

The protein resides in the cytoplasm. Molecular chaperone. Has ATPase activity. The sequence is that of Chaperone protein HtpG from Vesicomyosocius okutanii subsp. Calyptogena okutanii (strain HA).